Consider the following 146-residue polypeptide: DNA utilization protein HofO (146 aa).

The chain crosses the membrane as a helical span at residues tryptophan 20–histidine 37.

It is found in the cell inner membrane. Required for the use of extracellular DNA as a nutrient. This Escherichia coli (strain K12) protein is DNA utilization protein HofO (hofO).